Reading from the N-terminus, the 203-residue chain is E3 ubiquitin-protein ligase rnf152-A (203 aa).

Residues 12–55 (CQICFNYYSPRRRPKLLDCKRTCCSVCLQQMRACQKDLRCPWCR) form an RING-type; degenerate zinc finger. Residues 167 to 187 (SGICTVILVACVLVFLLGIVL) traverse the membrane as a helical segment.

Belongs to the RNF152 family.

Its subcellular location is the lysosome membrane. It catalyses the reaction S-ubiquitinyl-[E2 ubiquitin-conjugating enzyme]-L-cysteine + [acceptor protein]-L-lysine = [E2 ubiquitin-conjugating enzyme]-L-cysteine + N(6)-ubiquitinyl-[acceptor protein]-L-lysine.. Its pathway is protein modification; protein ubiquitination. Functionally, E3 ubiquitin-protein ligase that acts as a negative regulator of mTORC1 signaling by mediating ubiquitination of RagA/RRAGA and RHEB. Catalyzes 'Lys-63'-linked polyubiquitination of RagA/RRAGA in response to amino acid starvation, thereby regulating mTORC1 signaling. Also mediates monoubiquitination of RHEB, promoting its association with the TSC-TBC complex and subsequent inhibition. Also mediates 'Lys-48'-linked polyubiquitination of target proteins and their subsequent targeting to the proteasome for degradation. This Xenopus laevis (African clawed frog) protein is E3 ubiquitin-protein ligase rnf152-A.